The sequence spans 367 residues: 2-aminoethylphosphonate--pyruvate transaminase (367 aa).

Lys-194 bears the N6-(pyridoxal phosphate)lysine mark.

The protein belongs to the class-V pyridoxal-phosphate-dependent aminotransferase family. PhnW subfamily. Homodimer. Pyridoxal 5'-phosphate serves as cofactor.

It carries out the reaction (2-aminoethyl)phosphonate + pyruvate = phosphonoacetaldehyde + L-alanine. Its function is as follows. Involved in phosphonate degradation. This chain is 2-aminoethylphosphonate--pyruvate transaminase, found in Salmonella heidelberg (strain SL476).